Reading from the N-terminus, the 738-residue chain is Integrin beta-2-like protein (738 aa).

The signal sequence occupies residues 1 to 22 (MLGQCTLLPVLAGLLSLESALS). The Extracellular segment spans residues 23–671 (QLCTKDNVST…LVCAEISNTT (649 aa)). Positions 24-74 (LCTKDNVSTCQDCIRSGPSCAWCQKLNFTGRGEPDSVRCDTPEQLLLKGCT) constitute a PSI domain. Intrachain disulfides connect C25-C419, C33-C43, C36-C73, C46-C62, C218-C258, C358-C372, C421-C439, C431-C442, C444-C453, C455-C486, C469-C484, C478-C489, C491-C506, C508-C531, C513-C529, C521-C534, C536-C545, C547-C570, C554-C568, C562-C573, C575-C584, C594-C603, and C600-C664. N29 carries N-linked (GlcNAc...) asparagine glycosylation. Residues N50, N102, N173, N226, N252, N342, N360, and N386 are each glycosylated (N-linked (GlcNAc...) asparagine). The 204-residue stretch at 126–329 (SVDLYFLMGL…DSSNVAQLIR (204 aa)) folds into the VWFA domain. I-EGF domains follow at residues 421–454 (CQEQ…KNCE), 455–507 (CQTQ…QYCE), 508–546 (CNNV…SACQ), and 547–585 (CRMS…PLCE). N-linked (GlcNAc...) asparagine glycosylation is present at N473. N-linked (GlcNAc...) asparagine glycosylation is found at N627 and N669. The chain crosses the membrane as a helical span at residues 672 to 692 (ILLGVIVGVLLAVIFLLVYCM). Over 693–738 (VYLKGTQKAAKLPRKGGAQSTLAQQPHFQEPHHVEPVWNQERQGTQ) the chain is Cytoplasmic. The disordered stretch occupies residues 709-738 (GAQSTLAQQPHFQEPHHVEPVWNQERQGTQ). Residues 710 to 719 (AQSTLAQQPH) show a composition bias toward polar residues.

This sequence belongs to the integrin beta chain family. As to quaternary structure, monomer and homodimer. Unlike integrin beta chains, no alpha chain partner has yet been found. Post-translationally, N-glycosylated. As to expression, expressed predominantly in maturing and mature neutrophils.

The protein localises to the cell membrane. Functionally, during inflammatory stimulation, plays a role in retaining Cxcl13-expressing cells at the site of the inflammatory response. The polypeptide is Integrin beta-2-like protein (Mus musculus (Mouse)).